We begin with the raw amino-acid sequence, 136 residues long: uncharacterized protein (136 aa).

Disordered regions lie at residues 58–82 (TSDD…TTQT) and 112–136 (NNPK…VVTQ).

This is an uncharacterized protein from Dictyostelium discoideum (Social amoeba).